The sequence spans 370 residues: Phospho-2-dehydro-3-deoxyheptonate aldolase, phenylalanine-inhibited (370 aa).

Belongs to the class-I DAHP synthase family.

It catalyses the reaction D-erythrose 4-phosphate + phosphoenolpyruvate + H2O = 7-phospho-2-dehydro-3-deoxy-D-arabino-heptonate + phosphate. The protein operates within metabolic intermediate biosynthesis; chorismate biosynthesis; chorismate from D-erythrose 4-phosphate and phosphoenolpyruvate: step 1/7. Inhibited by phenyalanine. Its function is as follows. Stereospecific condensation of phosphoenolpyruvate (PEP) and D-erythrose-4-phosphate (E4P) giving rise to 3-deoxy-D-arabino-heptulosonate-7-phosphate (DAHP). This is Phospho-2-dehydro-3-deoxyheptonate aldolase, phenylalanine-inhibited (ARO3) from Saccharomyces cerevisiae (strain ATCC 204508 / S288c) (Baker's yeast).